A 274-amino-acid polypeptide reads, in one-letter code: Large ribosomal subunit protein uL2 (274 aa).

2 disordered regions span residues 35–60 (EPQH…GHKH) and 224–274 (VMNP…RRKK). The segment covering 50-60 (TTRHKGGGHKH) has biased composition (basic residues). The span at 229–246 (DHPHGGGEGKTGEGRHAV) shows a compositional bias: basic and acidic residues.

It belongs to the universal ribosomal protein uL2 family. Part of the 50S ribosomal subunit. Forms a bridge to the 30S subunit in the 70S ribosome.

One of the primary rRNA binding proteins. Required for association of the 30S and 50S subunits to form the 70S ribosome, for tRNA binding and peptide bond formation. It has been suggested to have peptidyltransferase activity; this is somewhat controversial. Makes several contacts with the 16S rRNA in the 70S ribosome. This chain is Large ribosomal subunit protein uL2, found in Delftia acidovorans (strain DSM 14801 / SPH-1).